Reading from the N-terminus, the 871-residue chain is Dual O-methyltransferase/FAD-dependent monooxygenase CTB3 (871 aa).

Positions 1–429 are O-methyltransferase; the sequence is MMQFQRDLEA…GLLTVRSAGQ (429 aa). Aspartate 279 provides a ligand contact to S-adenosyl-L-methionine. Histidine 331 (proton acceptor) is an active-site residue. Positions 430-871 are FAD-dependent monooxygenase; the sequence is TALSGTNTLT…NLVDCSEFVF (442 aa). FAD is bound by residues glutamate 485, arginine 569, aspartate 793, and alanine 806.

The protein in the C-terminal section; belongs to the paxM FAD-dependent monooxygenase family. It in the N-terminal section; belongs to the class I-like SAM-binding methyltransferase superfamily. Cation-independent O-methyltransferase family. COMT subfamily.

It carries out the reaction nor-toralactone + S-adenosyl-L-methionine = toralactone + S-adenosyl-L-homocysteine + H(+). It catalyses the reaction toralactone + NADH + O2 + H(+) = 1-(3,4,5-trihydroxy-7-methoxynaphthalen-2-yl)propan-2-one + CO2 + NAD(+). Its pathway is mycotoxin biosynthesis. In terms of biological role, dual O-methyltransferase/FAD-dependent monooxygenase; part of the gene cluster that mediates the biosynthesis of cercosporin, a light-activated, non-host-selective toxin. The perylenequinone chromophore of cercosporin absorbs light energy to attain an electronically-activated triplet state and produces active oxygen species such as the hydroxyl radical, superoxide, hydrogen peroxide or singlet oxygen upon reaction with oxygen molecules. These reactive oxygen species cause damage to various cellular components including lipids, proteins and nucleic acids. The first step of cercosporin biosynthesis is performed by the polyketide synthase CTB1 which catalyzes the formation of nor-toralactone. The starter unit acyltransferase (SAT) domain of CTB1 initiates polyketide extension by the selective utilization of acetyl-CoA, which is elongated to the heptaketide in the beta-ketoacyl synthase (KS) domain by successive condensations with six malonyl units introduced by the malonyl acyltransferase (MAT) domain. The product template (PT) domain catalyzes C4-C9 and C2-C11 aldol cyclizations and dehydrations to a trihydroxynaphthalene, which is thought to be delivered to the thioesterase (TE) domain for product release. The bifunctional enzyme CTB3 then methylates nor-toralactone to toralactone before conducting an unusual oxidative aromatic ring opening. The O-methyltransferase CTB2 further methylates the nascent OH-6 of the CBT3 product, blocking further oxidation at this site before the reductase CTB6 reduces the 2-oxopropyl ketone at position C7, giving naphthalene. The FAD-dependent monooxygenase CTB5 in concert with the multicopper oxidase CTB12 are responsible for homodimerization of naphthalene with CTB7 installing the dioxepine moiety, finally producing cercosporin. The fasciclin domain-containing protein CTB11 might act with CTB5 and CTB12 whereas the roles of CTB9 and CTB10 have still to be elucidated. The polypeptide is Dual O-methyltransferase/FAD-dependent monooxygenase CTB3 (Cercospora beticola (Sugarbeet leaf spot fungus)).